Consider the following 271-residue polypeptide: Probable WRKY transcription factor 69 (271 aa).

Disordered stretches follow at residues 1 to 47 and 130 to 166; these read MHRR…NVEK and PSSSANTKSHHRSSVVLKTAKKEEEYEEEEEELTVTA. Residues 9–18 show a composition bias toward acidic residues; that stretch reads ESDDEEDETY. A DNA-binding region (WRKY) is located at residues 64–130; sequence GEVYPPSDSW…YACDHNHPFP (67 aa).

Belongs to the WRKY group II-e family.

Its subcellular location is the nucleus. In terms of biological role, transcription factor. Interacts specifically with the W box (5'-(T)TGAC[CT]-3'), a frequently occurring elicitor-responsive cis-acting element. The chain is Probable WRKY transcription factor 69 (WRKY69) from Arabidopsis thaliana (Mouse-ear cress).